The following is a 250-amino-acid chain: MAELVIALDYPTMDAALATARALRGATDTAGDAGGRLWMKVGLELFTASGPEVVARLKDMGFPVFLDLKFHDIPNTVRGAVRSAVATGADMCNIHLPGGERMCRAAVEGLAEGAAARGHGAAPILLGVTVLTSVAPGELPGGADPSAEAARLAVCGREWGLGGVVCSGYEAAGIKQRCGRDFICLTPGIRPAAPQRSGSGDDDQRRVMTPAEAVRAGSDYLVVGRPVTGAAGPDGPAEAARRILAEMRGA.

Substrate contacts are provided by residues aspartate 9, lysine 40, 67-76 (DLKFHDIPNT), threonine 132, arginine 190, glutamine 204, glycine 224, and arginine 225. The active-site Proton donor is lysine 69.

It belongs to the OMP decarboxylase family. Type 1 subfamily. In terms of assembly, homodimer.

The enzyme catalyses orotidine 5'-phosphate + H(+) = UMP + CO2. The protein operates within pyrimidine metabolism; UMP biosynthesis via de novo pathway; UMP from orotate: step 2/2. Catalyzes the decarboxylation of orotidine 5'-monophosphate (OMP) to uridine 5'-monophosphate (UMP). In Nitratidesulfovibrio vulgaris (strain DSM 19637 / Miyazaki F) (Desulfovibrio vulgaris), this protein is Orotidine 5'-phosphate decarboxylase.